A 2664-amino-acid chain; its full sequence is Non-reducing polyketide synthase sorB (2664 aa).

The interval 21–45 (KSAPQSGNTADDIPNAASQPDTTST) is disordered. A compositionally biased stretch (polar residues) spans 36–45 (AASQPDTTST). The N-terminal acylcarrier protein transacylase domain (SAT) stretch occupies residues 112-281 (ADHARRLAEW…TTPSRIASDL (170 aa)). The active-site Nucleophile; for transacylase activity is C184. H302 serves as the catalytic Proton donor/acceptor; for transacylase activity. In terms of domain architecture, Ketosynthase family 3 (KS3) spans 428 to 849 (DNDIAVIGMS…GSNASMVIKQ (422 aa)). Active-site for beta-ketoacyl synthase activity residues include C596, H731, and H772. The tract at residues 961-1276 (CFGGQVSKSV…TQGTRQLADV (316 aa)) is malonyl-CoA:ACP transacylase (MAT) domain. The interval 1345-1477 (PGLYTFMGYG…GQLEFHRADD (133 aa)) is N-terminal hotdog fold. The 319-residue stretch at 1345–1663 (PGLYTFMGYG…FSARSMSELF (319 aa)) folds into the PKS/mFAS DH domain. A product template (PT) domain region spans residues 1376-1548 (VSGYTLGKTV…PSESAGRAVK (173 aa)). A C-terminal hotdog fold region spans residues 1507-1663 (DEVIQGQSIY…FSARSMSELF (157 aa)). The Carrier domain maps to 1711–1785 (TELWAKLLPV…GILAFLQSTL (75 aa)). O-(pantetheine 4'-phosphoryl)serine is present on S1745. Residues 1789 to 1820 (GEDDASQSSDAASSSRNTPPSSNDGILATPSP) are disordered. A compositionally biased stretch (low complexity) spans 1794–1803 (SQSSDAASSS). Residues 2015–2197 (FQLMADFLSR…DAGYKHVEWT (183 aa)) form a methyltransferase domain region. Residues 2281-2526 (VTGTTGSLGS…TLRSFPAVEG (246 aa)) are NADPH-binding (R) domain.

The cofactor is pantetheine 4'-phosphate.

It participates in secondary metabolite biosynthesis. Its function is as follows. Non-reducing polyketide synthase; part of the gene cluster that mediates the biosynthesis of sorbicillinoids, a diverse group of yellow secondary metabolites that restrict growth of competing pathogenic fungi but not of bacteria. Sorbicillinoids biosynthesis requires the action of two PKSs. SorA iteratively combines three acetyl units and the growing chain is modified by the ketoacyl reductase subunit, and optional by the enoyl reductase subunit in the second cycle. The polyketide is then handed over to the PKS SorB, which adds three more acetyl units, and two methyl groups. SorB releases an aldehyde, which undergoes spontaneous cyclization resulting in the formation of sorbicillin or 2',3'-dihydrosorbicillin. The monooxygenase sorC oxidizes sorbicillin and 2',3'-dihydrosorbicillin to 2',3'-dihydrosorbicillinol and sorbicillinol, respectively. The oxidoreductase sorD further converts sorbicillinol into oxosorbicillinol. Sorbicillinol is the building block for the other sorbicillinoids such as disorbicillinol, bisvertinolon, and dihydrobisvertinolone. This Penicillium rubens (strain ATCC 28089 / DSM 1075 / NRRL 1951 / Wisconsin 54-1255) (Penicillium chrysogenum) protein is Non-reducing polyketide synthase sorB.